The sequence spans 394 residues: 1-deoxy-D-xylulose 5-phosphate reductoisomerase (394 aa).

NADPH-binding residues include T12, G13, S14, I15, G38, and N126. K127 contributes to the 1-deoxy-D-xylulose 5-phosphate binding site. Residue E128 coordinates NADPH. Residue D151 participates in Mn(2+) binding. Residues S152, E153, S177, and H200 each contribute to the 1-deoxy-D-xylulose 5-phosphate site. E153 is a binding site for Mn(2+). G206 is a binding site for NADPH. 1-deoxy-D-xylulose 5-phosphate contacts are provided by S213, N218, K219, and E222. Mn(2+) is bound at residue E222.

Belongs to the DXR family. Mg(2+) serves as cofactor. The cofactor is Mn(2+).

It catalyses the reaction 2-C-methyl-D-erythritol 4-phosphate + NADP(+) = 1-deoxy-D-xylulose 5-phosphate + NADPH + H(+). Its pathway is isoprenoid biosynthesis; isopentenyl diphosphate biosynthesis via DXP pathway; isopentenyl diphosphate from 1-deoxy-D-xylulose 5-phosphate: step 1/6. In terms of biological role, catalyzes the NADPH-dependent rearrangement and reduction of 1-deoxy-D-xylulose-5-phosphate (DXP) to 2-C-methyl-D-erythritol 4-phosphate (MEP). The protein is 1-deoxy-D-xylulose 5-phosphate reductoisomerase of Beutenbergia cavernae (strain ATCC BAA-8 / DSM 12333 / CCUG 43141 / JCM 11478 / NBRC 16432 / NCIMB 13614 / HKI 0122).